The chain runs to 246 residues: MKKQDIIFGIHAVEALLKHSPERIIELWLLQGREDERLTPLIRQAKAFGTSIQVTSRKVLDEKAESTQHQGIVARVKAAKILAEHDLDELLAKTDLPFLLILDGVTDPHNLGACLRNADAAGVQGIIVPKDNSVGLTAVVSKVACGAAETVPLFQVTNLARTMRHLQEKGVWIVGTAGEADCELYQADLKGPLAIAMGAEGKGLRRLSRECCDTLVSIPMSGSVSSLNVSVATGICLFEAVRQRRS.

S-adenosyl-L-methionine-binding residues include glycine 198, isoleucine 218, and leucine 227.

The protein belongs to the class IV-like SAM-binding methyltransferase superfamily. RNA methyltransferase TrmH family. RlmB subfamily.

The protein resides in the cytoplasm. It carries out the reaction guanosine(2251) in 23S rRNA + S-adenosyl-L-methionine = 2'-O-methylguanosine(2251) in 23S rRNA + S-adenosyl-L-homocysteine + H(+). Functionally, specifically methylates the ribose of guanosine 2251 in 23S rRNA. In Shewanella oneidensis (strain ATCC 700550 / JCM 31522 / CIP 106686 / LMG 19005 / NCIMB 14063 / MR-1), this protein is 23S rRNA (guanosine-2'-O-)-methyltransferase RlmB.